The following is a 104-amino-acid chain: MALKLRRNDSVVILTGKDKGKTGIIKNILSLNQVIVKGLNLIKKHQKPVPSQNKSGGIIEKEAPIHISNIAILNPESNKADRIGFRFEEGRKVRFFKSTGKTIQ.

This sequence belongs to the universal ribosomal protein uL24 family. In terms of assembly, part of the 50S ribosomal subunit.

One of two assembly initiator proteins, it binds directly to the 5'-end of the 23S rRNA, where it nucleates assembly of the 50S subunit. Its function is as follows. One of the proteins that surrounds the polypeptide exit tunnel on the outside of the subunit. The sequence is that of Large ribosomal subunit protein uL24 from Buchnera aphidicola subsp. Acyrthosiphon pisum (strain 5A).